We begin with the raw amino-acid sequence, 116 residues long: MRKTFRIKKPADFQIVFNKHQSVANKYFIVYHIDKPEQKHFRLGLSVSKKVGKAHDRVWVKRRIRQSILELKSDLPHDIDLLVIARPAVAKQSQKFIKEQIIHVLKLADILKVEDK.

This sequence belongs to the RnpA family. Consists of a catalytic RNA component (M1 or rnpB) and a protein subunit.

It carries out the reaction Endonucleolytic cleavage of RNA, removing 5'-extranucleotides from tRNA precursor.. In terms of biological role, RNaseP catalyzes the removal of the 5'-leader sequence from pre-tRNA to produce the mature 5'-terminus. It can also cleave other RNA substrates such as 4.5S RNA. The protein component plays an auxiliary but essential role in vivo by binding to the 5'-leader sequence and broadening the substrate specificity of the ribozyme. In Leuconostoc citreum (strain KM20), this protein is Ribonuclease P protein component.